Here is a 783-residue protein sequence, read N- to C-terminus: BMP/retinoic acid-inducible neural-specific protein 2 (783 aa).

Residues 1 to 33 (MRWPCSSRFRGLWPEAAPWAVLLALGVPGWVLA) form the signal peptide. The MACPF domain occupies 85-281 (RYRIYREFAR…FVAAALSYIT (197 aa)). Asn-185, Asn-354, Asn-473, Asn-579, Asn-626, and Asn-658 each carry an N-linked (GlcNAc...) asparagine glycan.

Belongs to the BRINP family. As to expression, expressed in olfactory bulb, cerebellum and neuronal layers in hippocampus.

It is found in the secreted. Functionally, inhibits neuronal cell proliferation by negative regulation of the cell cycle transition. The sequence is that of BMP/retinoic acid-inducible neural-specific protein 2 (Brinp2) from Rattus norvegicus (Rat).